Reading from the N-terminus, the 941-residue chain is Pre-mRNA-processing factor 6 (941 aa).

The segment at 1–79 is disordered; the sequence is MNKKKKPFLG…DEDLNDTNYD (79 aa). The segment covering 39-65 has biased composition (basic and acidic residues); sequence DANDPVDDRHAPPGKRTVGDQMKKNQA. The segment covering 66–78 has biased composition (acidic residues); sequence ADDDDEDLNDTNY. The residue at position 143 (Ser143) is a Phosphoserine. Residues Thr180, Thr266, and Thr275 each carry the phosphothreonine modification. Ser279 bears the Phosphoserine mark. 9 HAT repeats span residues 384–416, 418–444, 445–476, 554–586, 588–620, 622–654, 689–721, 723–755, and 855–887; these read TDIRAKKRVLRKALEHVPNSVRLWKAAVELEEP, DARIMLSRAVECCPTSVELWLALARLE, TYENARKVLNKARENIPTDRHIWITAAKLEEA, NALECARAIYAYALQVFPSKKSVWLRAAYFEKN, GTRESLEALLQRAVAHCPKAEVLWLMGAKSKWL, GDVPAARSILALAFQANPNSEEIWLAAVKLESE, DNIRAAQDLCEEALRHYEDFPKLWMMKGQIEEQ, EMMEKAREAYNQGLKKCPHSTPLWLLLSRLEEK, and RKITKAREWFHRTVKIDSDLGDAWAFFYKFELQ.

Identified in the spliceosome B complex. Identified in the spliceosome C complex. Associates with the U5 snRNP particle. Component of the U4/U6-U5 tri-snRNP complex composed of the U4, U6 and U5 snRNAs and at least PRPF3, PRPF4, PRPF6, PRPF8, PRPF31, SNRNP200, TXNL4A, SNRNP40, DDX23, CD2BP2, PPIH, SNU13, EFTUD2, SART1 and USP39, LSm proteins LSm2-8 and Sm proteins. Interacts with ARAF. Interacts with AR and NR3C1, but not ESR1, independently of the presence of hormones. Interacts with USH1G. In terms of processing, phosphorylated by PRP4K during spliceosome assembly. As to expression, widely expressed.

It is found in the nucleus. The protein resides in the nucleoplasm. Its subcellular location is the nucleus speckle. Involved in pre-mRNA splicing as component of the U4/U6-U5 tri-snRNP complex, one of the building blocks of the spliceosome. Enhances dihydrotestosterone-induced transactivation activity of AR, as well as dexamethasone-induced transactivation activity of NR3C1, but does not affect estrogen-induced transactivation. The protein is Pre-mRNA-processing factor 6 of Homo sapiens (Human).